A 475-amino-acid polypeptide reads, in one-letter code: Ribulose bisphosphate carboxylase large chain (475 aa).

Residues 1–2 (MS) constitute a propeptide that is removed on maturation. Proline 3 bears the N-acetylproline mark. Lysine 14 is subject to N6,N6,N6-trimethyllysine. Substrate-binding residues include asparagine 123 and threonine 173. Catalysis depends on lysine 175, which acts as the Proton acceptor. Substrate is bound at residue lysine 177. Mg(2+) contacts are provided by lysine 201, aspartate 203, and glutamate 204. Lysine 201 bears the N6-carboxylysine mark. The active-site Proton acceptor is the histidine 294. Substrate-binding residues include arginine 295, histidine 327, and serine 379.

It belongs to the RuBisCO large chain family. Type I subfamily. As to quaternary structure, heterohexadecamer of 8 large chains and 8 small chains; disulfide-linked. The disulfide link is formed within the large subunit homodimers. Requires Mg(2+) as cofactor. The disulfide bond which can form in the large chain dimeric partners within the hexadecamer appears to be associated with oxidative stress and protein turnover.

It localises to the plastid. The protein localises to the chloroplast. The catalysed reaction is 2 (2R)-3-phosphoglycerate + 2 H(+) = D-ribulose 1,5-bisphosphate + CO2 + H2O. It carries out the reaction D-ribulose 1,5-bisphosphate + O2 = 2-phosphoglycolate + (2R)-3-phosphoglycerate + 2 H(+). RuBisCO catalyzes two reactions: the carboxylation of D-ribulose 1,5-bisphosphate, the primary event in carbon dioxide fixation, as well as the oxidative fragmentation of the pentose substrate in the photorespiration process. Both reactions occur simultaneously and in competition at the same active site. The polypeptide is Ribulose bisphosphate carboxylase large chain (Chloranthus spicatus (Chulantree)).